Here is a 68-residue protein sequence, read N- to C-terminus: MSKLGVLLTICLLLFALTAVPLDGDQPADRPAERMQDDISSERHPMFDAVRDCCPLPACPFGCNPCCG.

Positions 1 to 19 (MSKLGVLLTICLLLFALTA) are cleaved as a signal peptide. Positions 20 to 51 (VPLDGDQPADRPAERMQDDISSERHPMFDAVR) are excised as a propeptide. Cystine bridges form between Cys-53–Cys-67, Cys-54–Cys-63, and Cys-59–Cys-66. 4-hydroxyproline is present on residues Pro-55 and Pro-65. At Cys-67 the chain carries Cysteine amide.

Expressed by the venom duct.

The protein localises to the secreted. Its function is as follows. Intracranially injection into mice does not elicit symptoms. The sequence is that of Conotoxin mr3g from Conus marmoreus (Marble cone).